Reading from the N-terminus, the 221-residue chain is GTP-binding nuclear protein Ran-B1 (221 aa).

Residues 10-174 (DYPSFKLVIV…LYLARKLAGD (165 aa)) enclose the Small GTPase Ran-type domain. Residue 21–28 (DGGTGKTT) coordinates GTP. Residues 40–48 (KKYEPTIGV) form a switch-I region. Residues G71, 125–128 (NKVD), and 153–155 (SAK) each bind GTP. Residues 71–87 (GQEKFGGLRDGYYIHGQ) are switch-II.

It belongs to the small GTPase superfamily. Ran family. As to quaternary structure, found in a nuclear export complex with RanGTP, exportin and pre-miRNA.

The protein localises to the nucleus. GTP-binding protein involved in nucleocytoplasmic transport. Required for the import of protein into the nucleus and also for RNA export. Involved in chromatin condensation and control of cell cycle. This Nicotiana tabacum (Common tobacco) protein is GTP-binding nuclear protein Ran-B1 (RAN-B1).